Here is a 767-residue protein sequence, read N- to C-terminus: Photosystem I P700 chlorophyll a apoprotein A1 (767 aa).

The next 8 membrane-spanning stretches (helical) occupy residues 72 to 95 (IFSA…FHGA), 158 to 181 (LMAL…FHYH), 197 to 221 (LNHH…HVSL), 305 to 323 (IAHH…GHMY), 364 to 387 (WHAQ…QHMY), 403 to 429 (IGLF…IAMV), 451 to 473 (AIIS…LYIH), and 548 to 566 (FMVH…LILL). Positions 590 and 599 each coordinate [4Fe-4S] cluster. The next 2 helical transmembrane spans lie at 606–627 (HVFL…HFSW) and 681–703 (TSAY…MFLF). His692 is a chlorophyll a' binding site. Chlorophyll a contacts are provided by Met700 and Tyr708. Trp709 provides a ligand contact to phylloquinone. A helical membrane pass occupies residues 741 to 761 (AVGVAHYLLGGIATTWAFFHA).

The protein belongs to the PsaA/PsaB family. As to quaternary structure, the PsaA/B heterodimer binds the P700 chlorophyll special pair and subsequent electron acceptors. PSI consists of a core antenna complex that captures photons, and an electron transfer chain that converts photonic excitation into a charge separation. The cyanobacterial PSI reaction center is composed of one copy each of PsaA,B,C,D,E,F,I,J,K,L,M and X, and forms trimeric complexes. The cofactor is PSI electron transfer chain: 5 chlorophyll a, 1 chlorophyll a', 2 phylloquinones and 3 4Fe-4S clusters. PSI core antenna: 90 chlorophyll a, 22 carotenoids, 3 phospholipids and 1 galactolipid. P700 is a chlorophyll a/chlorophyll a' dimer, A0 is one or more chlorophyll a, A1 is one or both phylloquinones and FX is a shared 4Fe-4S iron-sulfur center..

The protein localises to the cellular thylakoid membrane. It catalyses the reaction reduced [plastocyanin] + hnu + oxidized [2Fe-2S]-[ferredoxin] = oxidized [plastocyanin] + reduced [2Fe-2S]-[ferredoxin]. Its function is as follows. PsaA and PsaB bind P700, the primary electron donor of photosystem I (PSI), as well as the electron acceptors A0, A1 and FX. PSI is a plastocyanin/cytochrome c6-ferredoxin oxidoreductase, converting photonic excitation into a charge separation, which transfers an electron from the donor P700 chlorophyll pair to the spectroscopically characterized acceptors A0, A1, FX, FA and FB in turn. Oxidized P700 is reduced on the lumenal side of the thylakoid membrane by plastocyanin or cytochrome c6. The chain is Photosystem I P700 chlorophyll a apoprotein A1 from Synechococcus sp. (strain CC9902).